We begin with the raw amino-acid sequence, 585 residues long: Protein cereblon (585 aa).

Disordered stretches follow at residues 1–109 and 156–195; these read MDEE…DLES and FSQE…IGFD. Polar residues predominate over residues 80 to 95; it reads QDDTASEGSHPSSDMS. Residues 158–167 show a composition bias toward basic and acidic residues; it reads QERRRSRTSE. Positions 178-189 are enriched in pro residues; sequence VDPPPQQPPRPP. The Lon N-terminal domain maps to 225-451; the sequence is HMLIFLHQHI…LIKSTFKDET (227 aa). The CULT domain maps to 450–559; sequence ETLFFCRYCN…LAGSSVRIGK (110 aa). Residues C455, C458, C524, and C527 each contribute to the Zn(2+) site.

The protein belongs to the CRBN family. Likely a component of a DCX (DDB1-CUL4-X-box) protein ligase complex. May interact with pic/DDB1. Ubiquitinated. Expressed in the fat body (at protein level).

It is found in the nucleus. The protein operates within protein modification; protein ubiquitination. In terms of biological role, substrate recognition component of a DCX (DDB1-CUL4-X-box) E3 protein ligase complex that mediates the ubiquitination and subsequent proteasomal degradation of target proteins. Has an essential role in mediating growth by negatively regulating insulin signaling. It also has a role in maintaining presynaptic function in the neuromuscular junction synapses of third-instar larvae. This Drosophila melanogaster (Fruit fly) protein is Protein cereblon.